A 527-amino-acid chain; its full sequence is Probable malate:quinone oxidoreductase (527 aa).

This sequence belongs to the MQO family. The cofactor is FAD.

The enzyme catalyses (S)-malate + a quinone = a quinol + oxaloacetate. It participates in carbohydrate metabolism; tricarboxylic acid cycle; oxaloacetate from (S)-malate (quinone route): step 1/1. The chain is Probable malate:quinone oxidoreductase from Pectobacterium atrosepticum (strain SCRI 1043 / ATCC BAA-672) (Erwinia carotovora subsp. atroseptica).